The sequence spans 242 residues: Aspartate/glutamate leucyltransferase (242 aa).

It belongs to the R-transferase family. Bpt subfamily.

The protein resides in the cytoplasm. The catalysed reaction is N-terminal L-glutamyl-[protein] + L-leucyl-tRNA(Leu) = N-terminal L-leucyl-L-glutamyl-[protein] + tRNA(Leu) + H(+). It carries out the reaction N-terminal L-aspartyl-[protein] + L-leucyl-tRNA(Leu) = N-terminal L-leucyl-L-aspartyl-[protein] + tRNA(Leu) + H(+). Functions in the N-end rule pathway of protein degradation where it conjugates Leu from its aminoacyl-tRNA to the N-termini of proteins containing an N-terminal aspartate or glutamate. This Alcanivorax borkumensis (strain ATCC 700651 / DSM 11573 / NCIMB 13689 / SK2) protein is Aspartate/glutamate leucyltransferase.